Reading from the N-terminus, the 135-residue chain is Translation initiation factor 2 subunit beta (135 aa).

Belongs to the eIF-2-beta/eIF-5 family. In terms of assembly, heterotrimer composed of an alpha, a beta and a gamma chain.

In terms of biological role, eIF-2 functions in the early steps of protein synthesis by forming a ternary complex with GTP and initiator tRNA. This is Translation initiation factor 2 subunit beta (eif2b) from Methanothermobacter thermautotrophicus (strain ATCC 29096 / DSM 1053 / JCM 10044 / NBRC 100330 / Delta H) (Methanobacterium thermoautotrophicum).